A 239-amino-acid polypeptide reads, in one-letter code: Lactate utilization protein A (239 aa).

It belongs to the LutA/YkgE family.

Its function is as follows. Is involved in L-lactate degradation and allows cells to grow with lactate as the sole carbon source. The polypeptide is Lactate utilization protein A (Shouchella clausii (strain KSM-K16) (Alkalihalobacillus clausii)).